The sequence spans 342 residues: HTH-type transcriptional regulator GbpR (342 aa).

The 58-residue stretch at leucine 16–asparagine 73 folds into the HTH lysR-type domain. Positions leucine 33 to glycine 52 form a DNA-binding region, H-T-H motif.

It belongs to the LysR transcriptional regulatory family.

In terms of biological role, does not seem to be required for sbpA expression. This chain is HTH-type transcriptional regulator GbpR (gbpR), found in Azospirillum brasilense.